We begin with the raw amino-acid sequence, 317 residues long: tRNA-cytidine(32) 2-sulfurtransferase (317 aa).

A PP-loop motif motif is present at residues 46-51; sequence SGGKDS. [4Fe-4S] cluster-binding residues include Cys121, Cys124, and Cys212.

The protein belongs to the TtcA family. As to quaternary structure, homodimer. Mg(2+) is required as a cofactor. It depends on [4Fe-4S] cluster as a cofactor.

The protein resides in the cytoplasm. The enzyme catalyses cytidine(32) in tRNA + S-sulfanyl-L-cysteinyl-[cysteine desulfurase] + AH2 + ATP = 2-thiocytidine(32) in tRNA + L-cysteinyl-[cysteine desulfurase] + A + AMP + diphosphate + H(+). It participates in tRNA modification. Catalyzes the ATP-dependent 2-thiolation of cytidine in position 32 of tRNA, to form 2-thiocytidine (s(2)C32). The sulfur atoms are provided by the cysteine/cysteine desulfurase (IscS) system. The protein is tRNA-cytidine(32) 2-sulfurtransferase of Shewanella loihica (strain ATCC BAA-1088 / PV-4).